Reading from the N-terminus, the 236-residue chain is Phosphoribosylaminoimidazole-succinocarboxamide synthase (236 aa).

Belongs to the SAICAR synthetase family.

The catalysed reaction is 5-amino-1-(5-phospho-D-ribosyl)imidazole-4-carboxylate + L-aspartate + ATP = (2S)-2-[5-amino-1-(5-phospho-beta-D-ribosyl)imidazole-4-carboxamido]succinate + ADP + phosphate + 2 H(+). The protein operates within purine metabolism; IMP biosynthesis via de novo pathway; 5-amino-1-(5-phospho-D-ribosyl)imidazole-4-carboxamide from 5-amino-1-(5-phospho-D-ribosyl)imidazole-4-carboxylate: step 1/2. The polypeptide is Phosphoribosylaminoimidazole-succinocarboxamide synthase (Rickettsia typhi (strain ATCC VR-144 / Wilmington)).